Reading from the N-terminus, the 421-residue chain is NAD-specific glutamate dehydrogenase (421 aa).

The substrate site is built by lysine 71 and lysine 95. Catalysis depends on lysine 107, which acts as the Proton donor. Threonine 191 and asparagine 222 together coordinate NAD(+). Position 355 (serine 355) interacts with substrate.

It belongs to the Glu/Leu/Phe/Val dehydrogenases family. Homohexamer.

It carries out the reaction L-glutamate + NAD(+) + H2O = 2-oxoglutarate + NH4(+) + NADH + H(+). The polypeptide is NAD-specific glutamate dehydrogenase (gluD) (Clostridioides difficile (Peptoclostridium difficile)).